Here is a 327-residue protein sequence, read N- to C-terminus: Probable cell division protein WhiA (327 aa).

The H-T-H motif DNA-binding region spans 275 to 308 (SLEELGRLADPPMTKDAVAGRIRRLLSMADRKAK). The disordered stretch occupies residues 304-327 (DRKAKQDGIPDTESAVTPDLLEDA).

The protein belongs to the WhiA family.

In terms of biological role, involved in cell division and chromosome segregation. This chain is Probable cell division protein WhiA, found in Mycobacterium sp. (strain MCS).